The primary structure comprises 174 residues: CD164 sialomucin-like 2 protein (174 aa).

A signal peptide spans 1–29 (MEAPGPRALRTALCGGCCCLLLCAQLAVA). Over 30-141 (GKGARGFGRG…AHSPGFDGAS (112 aa)) the chain is Extracellular. Residues Asn-71 and Asn-103 are each glycosylated (N-linked (GlcNAc...) asparagine). Residues 142-162 (FIGGVVLVLSLQAVAFFVLHF) traverse the membrane as a helical segment. Residues 163–174 (LKAKDSTYQTLI) lie on the Cytoplasmic side of the membrane.

The protein belongs to the CD164 family.

The protein resides in the membrane. The protein is CD164 sialomucin-like 2 protein (CD164L2) of Homo sapiens (Human).